The chain runs to 567 residues: Adenine deaminase (567 aa).

The protein belongs to the metallo-dependent hydrolases superfamily. Adenine deaminase family. Mn(2+) is required as a cofactor.

It carries out the reaction adenine + H2O + H(+) = hypoxanthine + NH4(+). The sequence is that of Adenine deaminase from Methanothrix thermoacetophila (strain DSM 6194 / JCM 14653 / NBRC 101360 / PT) (Methanosaeta thermophila).